The following is a 528-amino-acid chain: Intestinal-type alkaline phosphatase (528 aa).

Positions 1–19 (MQGPWVLLLLGLRLQLSLG) are cleaved as a signal peptide. Asp61 is a Mg(2+) binding site. Residues Asp61 and Ser111 each coordinate Zn(2+). Ser111 serves as the catalytic Phosphoserine intermediate. A disulfide bridge links Cys140 with Cys202. An N-linked (GlcNAc...) asparagine glycan is attached at Asn141. Ser174 contributes to the Mg(2+) binding site. A Ca(2+)-binding site is contributed by Glu235. A glycan (N-linked (GlcNAc...) asparagine) is linked at Asn268. Residues Phe288, Glu289, and Asp304 each coordinate Ca(2+). A Mg(2+)-binding site is contributed by Glu330. The Zn(2+) site is built by Asp335, His339, Asp376, and His377. N-linked (GlcNAc...) asparagine glycosylation occurs at Asn429. His451 contributes to the Zn(2+) binding site. Residues Cys486 and Cys493 are joined by a disulfide bond. The GPI-anchor amidated aspartate moiety is linked to residue Asp503. The propeptide at 504–528 (AAHPVAASLPLLAGTLLLLGASAAP) is removed in mature form.

It belongs to the alkaline phosphatase family. As to quaternary structure, homodimer. The cofactor is Mg(2+). It depends on Zn(2+) as a cofactor. Requires Ca(2+) as cofactor.

The protein localises to the cell membrane. The enzyme catalyses a phosphate monoester + H2O = an alcohol + phosphate. In terms of biological role, alkaline phosphatase that can hydrolyze various phosphate compounds. In Homo sapiens (Human), this protein is Intestinal-type alkaline phosphatase (ALPI).